We begin with the raw amino-acid sequence, 115 residues long: Large ribosomal subunit protein bL19 (115 aa).

This sequence belongs to the bacterial ribosomal protein bL19 family.

In terms of biological role, this protein is located at the 30S-50S ribosomal subunit interface and may play a role in the structure and function of the aminoacyl-tRNA binding site. This Buchnera aphidicola subsp. Acyrthosiphon pisum (strain Tuc7) protein is Large ribosomal subunit protein bL19.